A 465-amino-acid chain; its full sequence is Light-independent protochlorophyllide reductase subunit N (465 aa).

Residues Cys23, Cys48, and Cys108 each coordinate [4Fe-4S] cluster.

The protein belongs to the BchN/ChlN family. Protochlorophyllide reductase is composed of three subunits; ChlL, ChlN and ChlB. Forms a heterotetramer of two ChlB and two ChlN subunits. It depends on [4Fe-4S] cluster as a cofactor.

The enzyme catalyses chlorophyllide a + oxidized 2[4Fe-4S]-[ferredoxin] + 2 ADP + 2 phosphate = protochlorophyllide a + reduced 2[4Fe-4S]-[ferredoxin] + 2 ATP + 2 H2O. Its pathway is porphyrin-containing compound metabolism; chlorophyll biosynthesis (light-independent). Functionally, component of the dark-operative protochlorophyllide reductase (DPOR) that uses Mg-ATP and reduced ferredoxin to reduce ring D of protochlorophyllide (Pchlide) to form chlorophyllide a (Chlide). This reaction is light-independent. The NB-protein (ChlN-ChlB) is the catalytic component of the complex. This is Light-independent protochlorophyllide reductase subunit N from Trichodesmium erythraeum (strain IMS101).